The following is a 244-amino-acid chain: tRNA pseudouridine synthase B (244 aa).

The active-site Nucleophile is D46.

This sequence belongs to the pseudouridine synthase TruB family. Type 1 subfamily.

The enzyme catalyses uridine(55) in tRNA = pseudouridine(55) in tRNA. In terms of biological role, responsible for synthesis of pseudouridine from uracil-55 in the psi GC loop of transfer RNAs. This is tRNA pseudouridine synthase B from Bordetella avium (strain 197N).